The sequence spans 291 residues: 33 kDa chaperonin (291 aa).

2 disulfides stabilise this stretch: cysteine 235–cysteine 237 and cysteine 268–cysteine 271.

The protein belongs to the HSP33 family. Under oxidizing conditions two disulfide bonds are formed involving the reactive cysteines. Under reducing conditions zinc is bound to the reactive cysteines and the protein is inactive.

The protein localises to the cytoplasm. Redox regulated molecular chaperone. Protects both thermally unfolding and oxidatively damaged proteins from irreversible aggregation. Plays an important role in the bacterial defense system toward oxidative stress. The protein is 33 kDa chaperonin of Bacillus velezensis (strain DSM 23117 / BGSC 10A6 / LMG 26770 / FZB42) (Bacillus amyloliquefaciens subsp. plantarum).